Here is a 270-residue protein sequence, read N- to C-terminus: Glutamate racemase (270 aa).

Residues 14-15 (DS) and 46-47 (YG) each bind substrate. Residue C77 is the Proton donor/acceptor of the active site. Position 78-79 (78-79 (NT)) interacts with substrate. C189 serves as the catalytic Proton donor/acceptor. Residue 190–191 (TH) participates in substrate binding.

The protein belongs to the aspartate/glutamate racemases family.

It catalyses the reaction L-glutamate = D-glutamate. It functions in the pathway cell wall biogenesis; peptidoglycan biosynthesis. In terms of biological role, provides the (R)-glutamate required for cell wall biosynthesis. This chain is Glutamate racemase, found in Neisseria meningitidis serogroup C.